Here is a 372-residue protein sequence, read N- to C-terminus: Protein phosphatase Mn(2+)-dependent 1K (372 aa).

Residues 1 to 29 (MSTAALITLVRSGGNQVRRRVLLSSRLLQ) constitute a mitochondrion transit peptide. The disordered stretch occupies residues 34–55 (VTPTCHSSTSEPRCSRFDPDGS). Positions 46–61 (RCSRFDPDGSGSPATW) are critical for association with the BCKDH complex. Residues 94 to 346 (NVGCASQIGK…DNSTAVVVPF (253 aa)) form the PPM-type phosphatase domain. D127 and G128 together coordinate Mn(2+). Residue S248 is modified to Phosphoserine. Positions 298 and 337 each coordinate Mn(2+).

It belongs to the PP2C family. Monomer. Interacts with E1 and E2 components of the branched-chain alpha-ketoacid dehydrogenase (BCKDH) complex; this interaction requires colocalization in mitochondria. Interacts with BCKDHA but not with BCKDHB of the E1 component. Interacts with the 24-meric E2 core composed of DBT monomers with a 24:1 stoichiometry; the N-terminal region (residues 49-61) of PPM1K and C-terminal linker of the lipoyl domain of DBT (residues 145-160) are critical for this interaction, whereas the lipoyl prosthetic group is dispensable. Competes with BCKDK for binding to the E2 core; this interaction is modulated by branched-chain alpha-keto acids. At steady state, BCKDH holoenzyme preferentially binds BCKDK and BCKDHA is phosphorylated. In response to high levels of branched-chain alpha-keto acids, the inhibitory BCKDK is replaced by activating PPM1K leading to BCKDHA dephosphorylation and BCAA degradation. Mn(2+) is required as a cofactor.

It localises to the mitochondrion matrix. The catalysed reaction is O-phospho-L-seryl-[3-methyl-2-oxobutanoate dehydrogenase] + H2O = L-seryl-[3-methyl-2-oxobutanoate dehydrogenase] + phosphate. It carries out the reaction O-phospho-L-seryl-[protein] + H2O = L-seryl-[protein] + phosphate. Its pathway is protein modification. Its activity is regulated as follows. Up-regulated upon interaction with the 24-meric DBT/E2 core of the BCKDH complex. Inhibited by Mg(2+) and Ca(2+) ions likely by competing with Mn(2+) ions for binding to the same metal-binding sites. Its function is as follows. Serine/threonine-protein phosphatase component of macronutrients metabolism. Forms a functional kinase and phosphatase pair with BCKDK, serving as a metabolic regulatory node that coordinates branched-chain amino acids (BCAAs) with glucose and lipid metabolism via two distinct phosphoprotein targets: mitochondrial BCKDHA subunit of the branched-chain alpha-ketoacid dehydrogenase (BCKDH) complex and cytosolic ACLY, a lipogenic enzyme of Krebs cycle. At high levels of branched-chain ketoacids, dephosphorylates and activates mitochondrial BCKDH complex, a multisubunit complex consisting of three multimeric components each involved in different steps of BCAA catabolism: E1 composed of BCKDHA and BCKDHB, E2 core composed of DBT monomers, and E3 composed of DLD monomers. Tightly associates with the E2 component of BCKDH complex and dephosphorylates BCKDHA on Ser-337. Regulates the reversible phosphorylation of ACLY in response to changes in cellular carbohydrate abundance such as occurs during fasting to feeding metabolic transition. At fasting state, appears to dephosphorylate ACLY on Ser-455 and inactivate it. Refeeding stimulates MLXIPL/ChREBP transcription factor, leading to increased BCKDK to PPM1K expression ratio, phosphorylation and activation of ACLY that ultimately results in the generation of malonyl-CoA and oxaloacetate immediate substrates of de novo lipogenesis and gluconeogenesis, respectively. Recognizes phosphosites having SxS or RxxS motifs and strictly depends on Mn(2+) ions for the phosphatase activity. Regulates Ca(2+)-induced opening of mitochondrial transition pore and apoptotic cell death. This Homo sapiens (Human) protein is Protein phosphatase Mn(2+)-dependent 1K.